Here is a 33-residue protein sequence, read N- to C-terminus: Brevinin-2Ef (33 aa).

Cysteines 27 and 33 form a disulfide.

Expressed by the skin glands.

The protein resides in the secreted. Shows antibacterial activity against representative Gram-negative and Gram-positive bacterial species, and hemolytic activity. The protein is Brevinin-2Ef of Pelophylax ridibundus (Marsh frog).